Consider the following 370-residue polypeptide: 3-dehydroquinate synthase (370 aa).

NAD(+) is bound by residues 112 to 116 (GVVGD), 136 to 137 (TS), Lys149, Lys158, and 176 to 179 (TLRT). The Zn(2+) site is built by Glu191, His254, and His276.

It belongs to the sugar phosphate cyclases superfamily. Dehydroquinate synthase family. NAD(+) serves as cofactor. Co(2+) is required as a cofactor. The cofactor is Zn(2+).

The protein localises to the cytoplasm. It catalyses the reaction 7-phospho-2-dehydro-3-deoxy-D-arabino-heptonate = 3-dehydroquinate + phosphate. It functions in the pathway metabolic intermediate biosynthesis; chorismate biosynthesis; chorismate from D-erythrose 4-phosphate and phosphoenolpyruvate: step 2/7. Catalyzes the conversion of 3-deoxy-D-arabino-heptulosonate 7-phosphate (DAHP) to dehydroquinate (DHQ). The sequence is that of 3-dehydroquinate synthase from Xanthomonas axonopodis pv. citri (strain 306).